Here is a 103-residue protein sequence, read N- to C-terminus: Small ribosomal subunit protein uS10 (103 aa).

It belongs to the universal ribosomal protein uS10 family. Part of the 30S ribosomal subunit.

Functionally, involved in the binding of tRNA to the ribosomes. This Ralstonia pickettii (strain 12J) protein is Small ribosomal subunit protein uS10.